Here is a 322-residue protein sequence, read N- to C-terminus: Phosphatidylserine decarboxylase proenzyme (322 aa).

Residues Asp90, His147, and Ser254 each act as charge relay system; for autoendoproteolytic cleavage activity in the active site. Ser254 functions as the Schiff-base intermediate with substrate; via pyruvic acid; for decarboxylase activity in the catalytic mechanism. Ser254 carries the post-translational modification Pyruvic acid (Ser); by autocatalysis. The interval 295–322 is disordered; sequence VEPAPLPTEEIKAEHDASPLVDNKKDDT. Over residues 303 to 322 the composition is skewed to basic and acidic residues; that stretch reads EEIKAEHDASPLVDNKKDDT.

This sequence belongs to the phosphatidylserine decarboxylase family. PSD-B subfamily. Prokaryotic type I sub-subfamily. In terms of assembly, heterodimer of a large membrane-associated beta subunit and a small pyruvoyl-containing alpha subunit. Requires pyruvate as cofactor. Post-translationally, is synthesized initially as an inactive proenzyme. Formation of the active enzyme involves a self-maturation process in which the active site pyruvoyl group is generated from an internal serine residue via an autocatalytic post-translational modification. Two non-identical subunits are generated from the proenzyme in this reaction, and the pyruvate is formed at the N-terminus of the alpha chain, which is derived from the carboxyl end of the proenzyme. The autoendoproteolytic cleavage occurs by a canonical serine protease mechanism, in which the side chain hydroxyl group of the serine supplies its oxygen atom to form the C-terminus of the beta chain, while the remainder of the serine residue undergoes an oxidative deamination to produce ammonia and the pyruvoyl prosthetic group on the alpha chain. During this reaction, the Ser that is part of the protease active site of the proenzyme becomes the pyruvoyl prosthetic group, which constitutes an essential element of the active site of the mature decarboxylase.

The protein resides in the cell membrane. It carries out the reaction a 1,2-diacyl-sn-glycero-3-phospho-L-serine + H(+) = a 1,2-diacyl-sn-glycero-3-phosphoethanolamine + CO2. It functions in the pathway phospholipid metabolism; phosphatidylethanolamine biosynthesis; phosphatidylethanolamine from CDP-diacylglycerol: step 2/2. Catalyzes the formation of phosphatidylethanolamine (PtdEtn) from phosphatidylserine (PtdSer). This chain is Phosphatidylserine decarboxylase proenzyme, found in Salmonella agona (strain SL483).